The sequence spans 456 residues: Cysteine synthase 2 (456 aa).

The helical transmembrane segment at 9–29 (VYGTVALTAAFAAGILVTLGF) threads the bilayer.

Belongs to the cysteine synthase/cystathionine beta-synthase family. It depends on pyridoxal 5'-phosphate as a cofactor.

It localises to the mitochondrion outer membrane. The catalysed reaction is O-acetyl-L-serine + hydrogen sulfide = L-cysteine + acetate. Its function is as follows. Putative cysteine synthase that catalyzes the conversion of O-acetyl-L-serine (OAS) into cysteine, the last step in the cysteine biosynthesis pathway. However, in contrast to cysteine synthase cys-17, this CS-like protein may not function in cysteine biosynthesis. The protein is Cysteine synthase 2 of Neurospora crassa (strain ATCC 24698 / 74-OR23-1A / CBS 708.71 / DSM 1257 / FGSC 987).